The primary structure comprises 638 residues: 1-deoxy-D-xylulose-5-phosphate synthase (638 aa).

Residues His71 and 112–114 each bind thiamine diphosphate; that span reads SHA. Asp144 serves as a coordination point for Mg(2+). Thiamine diphosphate contacts are provided by residues 145 to 146, Asn173, Tyr284, and Glu365; that span reads GA. Residue Asn173 participates in Mg(2+) binding.

The protein belongs to the transketolase family. DXPS subfamily. As to quaternary structure, homodimer. Mg(2+) serves as cofactor. Requires thiamine diphosphate as cofactor.

The catalysed reaction is D-glyceraldehyde 3-phosphate + pyruvate + H(+) = 1-deoxy-D-xylulose 5-phosphate + CO2. The protein operates within metabolic intermediate biosynthesis; 1-deoxy-D-xylulose 5-phosphate biosynthesis; 1-deoxy-D-xylulose 5-phosphate from D-glyceraldehyde 3-phosphate and pyruvate: step 1/1. In terms of biological role, catalyzes the acyloin condensation reaction between C atoms 2 and 3 of pyruvate and glyceraldehyde 3-phosphate to yield 1-deoxy-D-xylulose-5-phosphate (DXP). This is 1-deoxy-D-xylulose-5-phosphate synthase from Mycobacterium sp. (strain KMS).